Reading from the N-terminus, the 442-residue chain is Probable serine/threonine-protein kinase PBL17 (442 aa).

The N-myristoyl glycine moiety is linked to residue glycine 2. Cysteine 4 is lipidated: S-palmitoyl cysteine. The residue at position 79 (threonine 79) is a Phosphothreonine. The Protein kinase domain occupies 90–370; that stretch reads FRPDYILGEG…NHVVEVLETL (281 aa). ATP contacts are provided by residues 96–104 and lysine 125; that span reads LGEGGFGVV. A Phosphotyrosine modification is found at tyrosine 170. Aspartate 220 serves as the catalytic Proton acceptor. Residue serine 254 is modified to Phosphoserine. Residues threonine 255 and threonine 260 each carry the phosphothreonine modification. Residue tyrosine 268 is modified to Phosphotyrosine. Residues 385–442 are disordered; the sequence is HSRGKSVTLYEASSDSQGTRDGNGQRRRRPESGRSKSEAAVDTEKYVSTLSEPDTTKI. Positions 395–406 are enriched in polar residues; that stretch reads EASSDSQGTRDG. The segment covering 414–429 has biased composition (basic and acidic residues); sequence PESGRSKSEAAVDTEK. Positions 430–442 are enriched in polar residues; it reads YVSTLSEPDTTKI.

This sequence belongs to the protein kinase superfamily. Ser/Thr protein kinase family.

It localises to the cell membrane. It catalyses the reaction L-seryl-[protein] + ATP = O-phospho-L-seryl-[protein] + ADP + H(+). The enzyme catalyses L-threonyl-[protein] + ATP = O-phospho-L-threonyl-[protein] + ADP + H(+). Functionally, may be involved in plant defense signaling. The protein is Probable serine/threonine-protein kinase PBL17 of Arabidopsis thaliana (Mouse-ear cress).